We begin with the raw amino-acid sequence, 369 residues long: Dual-specificity RNA methyltransferase RlmN (369 aa).

Glu94 functions as the Proton acceptor in the catalytic mechanism. The region spanning 113–346 (ESEKWTMCLS…CTIRESRGID (234 aa)) is the Radical SAM core domain. Residues Cys120 and Cys351 are joined by a disulfide bond. Cys127, Cys131, and Cys134 together coordinate [4Fe-4S] cluster. S-adenosyl-L-methionine is bound by residues 177 to 178 (GE), Ser209, 232 to 234 (SLH), and Asn308. The active-site S-methylcysteine intermediate is Cys351.

It belongs to the radical SAM superfamily. RlmN family. [4Fe-4S] cluster is required as a cofactor.

Its subcellular location is the cytoplasm. The catalysed reaction is adenosine(2503) in 23S rRNA + 2 reduced [2Fe-2S]-[ferredoxin] + 2 S-adenosyl-L-methionine = 2-methyladenosine(2503) in 23S rRNA + 5'-deoxyadenosine + L-methionine + 2 oxidized [2Fe-2S]-[ferredoxin] + S-adenosyl-L-homocysteine. It carries out the reaction adenosine(37) in tRNA + 2 reduced [2Fe-2S]-[ferredoxin] + 2 S-adenosyl-L-methionine = 2-methyladenosine(37) in tRNA + 5'-deoxyadenosine + L-methionine + 2 oxidized [2Fe-2S]-[ferredoxin] + S-adenosyl-L-homocysteine. In terms of biological role, specifically methylates position 2 of adenine 2503 in 23S rRNA and position 2 of adenine 37 in tRNAs. m2A2503 modification seems to play a crucial role in the proofreading step occurring at the peptidyl transferase center and thus would serve to optimize ribosomal fidelity. This Helicobacter hepaticus (strain ATCC 51449 / 3B1) protein is Dual-specificity RNA methyltransferase RlmN.